A 117-amino-acid polypeptide reads, in one-letter code: Immunoglobulin lambda variable 6-57 (117 aa).

An N-terminal signal peptide occupies residues 1–19 (MAWAPLLLTLLAHCTGSWA). A framework-1 region spans residues 20-44 (NFMLTQPHSVSESPGKTVTISCTGS). Residues 20–117 (NFMLTQPHSV…YYCQSYDSSN (98 aa)) form the Ig-like domain. A disulfide bond links C41 and C110. Residues 45–52 (SGSIASNY) form a complementarity-determining-1 region. Residues 53–69 (VQWYQQRPGSAPTTVIY) are framework-2. Residues 65-97 (TTVIYEDNQRPSGVPDRFSGSIDSSSNSASLTI) are disordered. The interval 70–72 (EDN) is complementarity-determining-2. The framework-3 stretch occupies residues 73 to 110 (QRPSGVPDRFSGSIDSSSNSASLTISGLKTEDEADYYC). Residues 83 to 97 (SGSIDSSSNSASLTI) show a composition bias toward low complexity. Residues 111-117 (QSYDSSN) are complementarity-determining-3.

In terms of assembly, immunoglobulins are composed of two identical heavy chains and two identical light chains; disulfide-linked.

It is found in the secreted. The protein resides in the cell membrane. Its function is as follows. V region of the variable domain of immunoglobulin light chains that participates in the antigen recognition. Immunoglobulins, also known as antibodies, are membrane-bound or secreted glycoproteins produced by B lymphocytes. In the recognition phase of humoral immunity, the membrane-bound immunoglobulins serve as receptors which, upon binding of a specific antigen, trigger the clonal expansion and differentiation of B lymphocytes into immunoglobulins-secreting plasma cells. Secreted immunoglobulins mediate the effector phase of humoral immunity, which results in the elimination of bound antigens. The antigen binding site is formed by the variable domain of one heavy chain, together with that of its associated light chain. Thus, each immunoglobulin has two antigen binding sites with remarkable affinity for a particular antigen. The variable domains are assembled by a process called V-(D)-J rearrangement and can then be subjected to somatic hypermutations which, after exposure to antigen and selection, allow affinity maturation for a particular antigen. This is Immunoglobulin lambda variable 6-57 from Homo sapiens (Human).